A 166-amino-acid polypeptide reads, in one-letter code: 2-C-methyl-D-erythritol 2,4-cyclodiphosphate synthase (166 aa).

Positions 11 and 13 each coordinate a divalent metal cation. 4-CDP-2-C-methyl-D-erythritol 2-phosphate contacts are provided by residues 11 to 13 (DVH) and 40 to 41 (HS). His-48 provides a ligand contact to a divalent metal cation. Residues 62-64 (DLG), 135-138 (TTSD), Phe-142, and Arg-145 each bind 4-CDP-2-C-methyl-D-erythritol 2-phosphate.

It belongs to the IspF family. As to quaternary structure, homotrimer. Requires a divalent metal cation as cofactor.

The enzyme catalyses 4-CDP-2-C-methyl-D-erythritol 2-phosphate = 2-C-methyl-D-erythritol 2,4-cyclic diphosphate + CMP. Its pathway is isoprenoid biosynthesis; isopentenyl diphosphate biosynthesis via DXP pathway; isopentenyl diphosphate from 1-deoxy-D-xylulose 5-phosphate: step 4/6. Functionally, involved in the biosynthesis of isopentenyl diphosphate (IPP) and dimethylallyl diphosphate (DMAPP), two major building blocks of isoprenoid compounds. Catalyzes the conversion of 4-diphosphocytidyl-2-C-methyl-D-erythritol 2-phosphate (CDP-ME2P) to 2-C-methyl-D-erythritol 2,4-cyclodiphosphate (ME-CPP) with a corresponding release of cytidine 5-monophosphate (CMP). This is 2-C-methyl-D-erythritol 2,4-cyclodiphosphate synthase from Pseudarthrobacter chlorophenolicus (strain ATCC 700700 / DSM 12829 / CIP 107037 / JCM 12360 / KCTC 9906 / NCIMB 13794 / A6) (Arthrobacter chlorophenolicus).